The sequence spans 351 residues: UDP-3-O-acylglucosamine N-acyltransferase (351 aa).

Residue His-240 is the Proton acceptor of the active site.

The protein belongs to the transferase hexapeptide repeat family. LpxD subfamily. Homotrimer.

It catalyses the reaction a UDP-3-O-[(3R)-3-hydroxyacyl]-alpha-D-glucosamine + a (3R)-hydroxyacyl-[ACP] = a UDP-2-N,3-O-bis[(3R)-3-hydroxyacyl]-alpha-D-glucosamine + holo-[ACP] + H(+). It functions in the pathway bacterial outer membrane biogenesis; LPS lipid A biosynthesis. Catalyzes the N-acylation of UDP-3-O-acylglucosamine using 3-hydroxyacyl-ACP as the acyl donor. Is involved in the biosynthesis of lipid A, a phosphorylated glycolipid that anchors the lipopolysaccharide to the outer membrane of the cell. This chain is UDP-3-O-acylglucosamine N-acyltransferase, found in Pseudomonas fluorescens (strain SBW25).